The following is an 87-amino-acid chain: MLVLLVAVLVTAVYAFVHAALQRPDAYTAADKLTKPVWLVILGAAVALASILYPVLGVLGMAMSACASGVYLVDVRPKLLEIQGKSR.

Residues 1-19 (MLVLLVAVLVTAVYAFVHA) form the signal peptide. The chain crosses the membrane as a helical span at residues 39–59 (LVILGAAVALASILYPVLGVL).

The protein to M.leprae ML2453.

The protein localises to the membrane. This is an uncharacterized protein from Mycobacterium bovis (strain ATCC BAA-935 / AF2122/97).